A 209-amino-acid polypeptide reads, in one-letter code: Protein Nef (209 aa).

Gly2 carries the N-myristoyl glycine; by host lipid modification. A Phosphoserine; by host modification is found at Ser6. Disordered stretches follow at residues Ile16–Gln35 and Asp43–Phe71. The segment covering Ala47–Glu61 has biased composition (low complexity). Residues Glu65–Glu68 are acidic; interacts with host PACS1 and PACS2; stabilizes the interaction of NEF/MHC-I with host AP1M1; necessary for MHC-I internalization. The segment at Pro72–Pro81 is SH3-binding; interaction with Src family tyrosine kinases. The PxxP; stabilizes the interaction of NEF/MHC-I with host AP1M1; necessary for MHC-I internalization motif lies at Pro75–Pro78. A mediates dimerization, Nef-PTE1 interaction region spans residues Glu111–Trp127. The interval Met151 to Val183 is binding to ATP6V1H. Positions Leu167–Leu168 match the Dileucine internalization motif; necessary for CD4 internalization motif. The Diacidic; necessary for CD4 internalization motif lies at Glu177–Asp178.

This sequence belongs to the lentivirus primate group Nef protein family. In terms of assembly, monomer; cytosolic form. Homodimer; membrane bound form. Interacts with Nef associated p21-activated kinase (PAK2); this interaction activates PAK2. Associates with the Nef-MHC-I-AP1 complex; this complex is required for MHC-I internalization. Interacts (via C-terminus) with host PI3-kinase. Interacts with host PACS1; this interaction seems to be weak. Interacts with host PACS2. Interacts with host LCK and MAPK3; these interactions inhibit the kinase activity of the latter. Interacts with host ATP6V1H; this interaction may play a role in CD4 endocytosis. Associates with the CD4-Nef-AP2 complex; this complex is required for CD4 internalization. Interacts with host AP2 subunit alpha and AP2 subunit sigma2. Interacts with TCR-zeta chain; this interaction up-regulates the Fas ligand (FasL) surface expression. Interacts with host HCK, LYN, and SRC; these interactions activate the Src family kinases. Interacts with MAP3K5; this interaction inhibits the Fas and TNFR-mediated death signals. Interacts with beta-COP and PTE1. Interacts with human RACK1; this increases Nef phosphorylation by PKC. Interacts with TP53; this interaction decreases the half-life of TP53, protecting the infected cell against p53-mediated apoptosis. Post-translationally, the virion-associated Nef proteins are cleaved by the viral protease to release the soluble C-terminal core protein. Nef is probably cleaved concomitantly with viral structural proteins on maturation of virus particles. In terms of processing, myristoylated. Phosphorylated on serine residues, probably by host PKCdelta and theta.

Its subcellular location is the host cell membrane. It is found in the virion. The protein localises to the secreted. It localises to the host Golgi apparatus membrane. Its function is as follows. Factor of infectivity and pathogenicity, required for optimal virus replication. Alters numerous pathways of T-lymphocyte function and down-regulates immunity surface molecules in order to evade host defense and increase viral infectivity. Alters the functionality of other immunity cells, like dendritic cells, monocytes/macrophages and NK cells. In infected CD4(+) T-lymphocytes, down-regulates the surface MHC-I, mature MHC-II, CD4, CD28, CCR5 and CXCR4 molecules. Mediates internalization and degradation of host CD4 through the interaction of with the cytoplasmic tail of CD4, the recruitment of AP-2 (clathrin adapter protein complex 2), internalization through clathrin coated pits, and subsequent transport to endosomes and lysosomes for degradation. Diverts host MHC-I molecules to the trans-Golgi network-associated endosomal compartments by an endocytic pathway to finally target them for degradation. MHC-I down-regulation may involve AP-1 (clathrin adapter protein complex 1) or possibly Src family kinase-ZAP70/Syk-PI3K cascade recruited by PACS2. In consequence infected cells are masked for immune recognition by cytotoxic T-lymphocytes. Decreasing the number of immune receptors also prevents reinfection by more HIV particles (superinfection). Down-regulates host SERINC3 and SERINC5 thereby excluding these proteins from the viral particles. Virion infectivity is drastically higher when SERINC3 or SERINC5 are excluded from the viral envelope, because these host antiviral proteins impair the membrane fusion event necessary for subsequent virion penetration. In terms of biological role, bypasses host T-cell signaling by inducing a transcriptional program nearly identical to that of anti-CD3 cell activation. Interaction with TCR-zeta chain up-regulates the Fas ligand (FasL). Increasing surface FasL molecules and decreasing surface MHC-I molecules on infected CD4(+) cells send attacking cytotoxic CD8+ T-lymphocytes into apoptosis. Functionally, plays a role in optimizing the host cell environment for viral replication without causing cell death by apoptosis. Protects the infected cells from apoptosis in order to keep them alive until the next virus generation is ready to strike. Inhibits the Fas and TNFR-mediated death signals by blocking MAP3K5/ASK1. Decreases the half-life of TP53, protecting the infected cell against p53-mediated apoptosis. Inhibits the apoptotic signals regulated by the Bcl-2 family proteins through the formation of a Nef/PI3-kinase/PAK2 complex that leads to activation of PAK2 and induces phosphorylation of host BAD. Its function is as follows. Extracellular Nef protein targets CD4(+) T-lymphocytes for apoptosis by interacting with CXCR4 surface receptors. The chain is Protein Nef from Human immunodeficiency virus type 1 group M subtype A (isolate MAL) (HIV-1).